A 179-amino-acid chain; its full sequence is Acireductone dioxygenase (179 aa).

The segment at 1–21 (MVQAWYMDDSTEDQRKPHHLQ) is disordered. 4 residues coordinate Fe(2+): histidine 88, histidine 90, glutamate 94, and histidine 133. 4 residues coordinate Ni(2+): histidine 88, histidine 90, glutamate 94, and histidine 133.

It belongs to the acireductone dioxygenase (ARD) family. Monomer. Interacts with MMP14. Requires Fe(2+) as cofactor. Ni(2+) serves as cofactor.

The protein resides in the cytoplasm. The protein localises to the nucleus. Its subcellular location is the cell membrane. The enzyme catalyses 1,2-dihydroxy-5-(methylsulfanyl)pent-1-en-3-one + O2 = 4-methylsulfanyl-2-oxobutanoate + formate + 2 H(+). It carries out the reaction 1,2-dihydroxy-5-(methylsulfanyl)pent-1-en-3-one + O2 = 3-(methylsulfanyl)propanoate + CO + formate + 2 H(+). It participates in amino-acid biosynthesis; L-methionine biosynthesis via salvage pathway; L-methionine from S-methyl-5-thio-alpha-D-ribose 1-phosphate: step 5/6. In terms of biological role, catalyzes 2 different reactions between oxygen and the acireductone 1,2-dihydroxy-3-keto-5-methylthiopentene (DHK-MTPene) depending upon the metal bound in the active site. Fe-containing acireductone dioxygenase (Fe-ARD) produces formate and 2-keto-4-methylthiobutyrate (KMTB), the alpha-ketoacid precursor of methionine in the methionine recycle pathway. Ni-containing acireductone dioxygenase (Ni-ARD) produces methylthiopropionate, carbon monoxide and formate, and does not lie on the methionine recycle pathway. This chain is Acireductone dioxygenase (adi1), found in Xenopus tropicalis (Western clawed frog).